The primary structure comprises 449 residues: MLDPILLRKDLQTVVDRLQSRGVSFDTERFNDLESRRKLVQTETEALQARRNALAKQIGQLKAKGEDASAVMAESQALPGQLKQLEESLAMLQQQLNELLMSVPNLPHASVPVGASSDDNVEVRRWLPAEAGADGNPAPLGFAPRDHVAIGEPLGLDFDTAAKLSGARFSFMRGQMARLHRALAQFMLDLQTGEHGYTECYTPYIVNSSTLYGTGQLPKFKDDMFFVTKGGGDDDPKVDEQGKPLAREDQYLISTSEITLTSVVRDTIVPGDVLPLRMTAHTPCFRSEAGSGGRDTRGMIRQHQFDKVEMVQVANPEQSYDALEQMVGHAEEVLRRLGLPYRVMLLCTGDMGFGAAKTYDLEVWLPAQNTWREISSVSNCESFQARRMQARFRADAKSKPEFVHTLNGSGLAVGRALVAVLENYQQEDGSVRIPEALRPYMGGIEQLKA.

255–257 (TSE) lines the L-serine pocket. 286–288 (RSE) lines the ATP pocket. Glu309 contributes to the L-serine binding site. Residue 373 to 376 (EISS) coordinates ATP. An L-serine-binding site is contributed by Ser409.

Belongs to the class-II aminoacyl-tRNA synthetase family. Type-1 seryl-tRNA synthetase subfamily. As to quaternary structure, homodimer. The tRNA molecule binds across the dimer.

Its subcellular location is the cytoplasm. It catalyses the reaction tRNA(Ser) + L-serine + ATP = L-seryl-tRNA(Ser) + AMP + diphosphate + H(+). It carries out the reaction tRNA(Sec) + L-serine + ATP = L-seryl-tRNA(Sec) + AMP + diphosphate + H(+). Its pathway is aminoacyl-tRNA biosynthesis; selenocysteinyl-tRNA(Sec) biosynthesis; L-seryl-tRNA(Sec) from L-serine and tRNA(Sec): step 1/1. In terms of biological role, catalyzes the attachment of serine to tRNA(Ser). Is also able to aminoacylate tRNA(Sec) with serine, to form the misacylated tRNA L-seryl-tRNA(Sec), which will be further converted into selenocysteinyl-tRNA(Sec). The sequence is that of Serine--tRNA ligase from Bordetella avium (strain 197N).